The chain runs to 64 residues: MIQGFYKDQKLHLLEDPMQQYTVMKVEENAVCVYRWIDDYRHKIERFTDVEEAKKLLGEGWPKQ.

This chain is SPbeta prophage-derived uncharacterized protein YosJ (yosJ), found in Bacillus subtilis (strain 168).